The sequence spans 251 residues: Lactose phosphotransferase system repressor (251 aa).

The HTH deoR-type domain occupies Lys-3–Ser-58. Positions Ile-20 to Asp-39 form a DNA-binding region, H-T-H motif.

In terms of biological role, repressor of the lactose catabolism operon. Galactose-6-phosphate is the inducer. The chain is Lactose phosphotransferase system repressor (lacR) from Streptococcus mutans serotype c (strain ATCC 700610 / UA159).